A 307-amino-acid chain; its full sequence is Adenosylcobinamide-GDP ribazoletransferase (307 aa).

Transmembrane regions (helical) follow at residues 22-42, 58-78, 80-100, 137-157, 161-181, 212-232, 248-268, and 283-303; these read PLFE…VPGA, PFVG…IGPI, GVIH…WELL, FGLA…ASLV, VWWM…VTAL, TAAL…LTSV, AWLG…AALF, and CIGA…AVVA.

The protein belongs to the CobS family. Mg(2+) serves as cofactor.

The protein resides in the cell membrane. The catalysed reaction is alpha-ribazole + adenosylcob(III)inamide-GDP = adenosylcob(III)alamin + GMP + H(+). It catalyses the reaction alpha-ribazole 5'-phosphate + adenosylcob(III)inamide-GDP = adenosylcob(III)alamin 5'-phosphate + GMP + H(+). Its pathway is cofactor biosynthesis; adenosylcobalamin biosynthesis; adenosylcobalamin from cob(II)yrinate a,c-diamide: step 7/7. Functionally, joins adenosylcobinamide-GDP and alpha-ribazole to generate adenosylcobalamin (Ado-cobalamin). Also synthesizes adenosylcobalamin 5'-phosphate from adenosylcobinamide-GDP and alpha-ribazole 5'-phosphate. This chain is Adenosylcobinamide-GDP ribazoletransferase, found in Corynebacterium glutamicum (strain ATCC 13032 / DSM 20300 / JCM 1318 / BCRC 11384 / CCUG 27702 / LMG 3730 / NBRC 12168 / NCIMB 10025 / NRRL B-2784 / 534).